The primary structure comprises 875 residues: Alanine--tRNA ligase (875 aa).

Positions 567, 571, 669, and 673 each coordinate Zn(2+).

This sequence belongs to the class-II aminoacyl-tRNA synthetase family. Zn(2+) serves as cofactor.

Its subcellular location is the cytoplasm. It catalyses the reaction tRNA(Ala) + L-alanine + ATP = L-alanyl-tRNA(Ala) + AMP + diphosphate. In terms of biological role, catalyzes the attachment of alanine to tRNA(Ala) in a two-step reaction: alanine is first activated by ATP to form Ala-AMP and then transferred to the acceptor end of tRNA(Ala). Also edits incorrectly charged Ser-tRNA(Ala) and Gly-tRNA(Ala) via its editing domain. This chain is Alanine--tRNA ligase, found in Geobacter sulfurreducens (strain ATCC 51573 / DSM 12127 / PCA).